The primary structure comprises 92 residues: MARSIRKGPFIDHHLISKVEAAIESKSKKPIKTWSRRSTIVPEMIDLTIAVHNGKDHVPVFITDNMVGHKLGEFAMTRTFKGHSGDRKAKGK.

The protein belongs to the universal ribosomal protein uS19 family.

Functionally, protein S19 forms a complex with S13 that binds strongly to the 16S ribosomal RNA. The polypeptide is Small ribosomal subunit protein uS19 (Legionella pneumophila (strain Paris)).